The following is a 449-amino-acid chain: Probable hexaprenyl pyrophosphate synthase, mitochondrial (449 aa).

Isopentenyl diphosphate contacts are provided by Lys122, Arg125, and His200. Positions 207 and 211 each coordinate Mg(2+). Residue Arg216 participates in an all-trans-polyprenyl diphosphate binding. Position 217 (Arg217) interacts with isopentenyl diphosphate. An all-trans-polyprenyl diphosphate-binding residues include Lys300, Thr301, Gln338, and Lys355.

It belongs to the FPP/GGPP synthase family. Requires Mg(2+) as cofactor.

The protein resides in the mitochondrion. It participates in cofactor biosynthesis; ubiquinone biosynthesis. Its function is as follows. Assembly of polyisoprenoid side chains. The polyprenyl synthase of coenzyme Q biosynthesis catalyzes the formation from isopentenyl diphosphate of all trans-polyprenyl pyrophosphates generally ranging in length of between 6 and 10 isoprene units depending on the species. The chain is Probable hexaprenyl pyrophosphate synthase, mitochondrial from Neurospora crassa (strain ATCC 24698 / 74-OR23-1A / CBS 708.71 / DSM 1257 / FGSC 987).